A 449-amino-acid chain; its full sequence is Keratin, type I cytoskeletal 27 (449 aa).

The interval 1–73 (MSVRFSSASR…VNEHGLLSGN (73 aa)) is head. The interval 74-109 (EKVTMQNLNDRLASYLENVQALEEANADLEQKIKDW) is coil 1A. One can recognise an IF rod domain in the interval 74-389 (EKVTMQNLND…LLIGGDEGSC (316 aa)). Residues 110 to 131 (YEKFGPGSCRGLDHDYSRYFPI) form a linker 1 region. The segment at 132–223 (IDDLRTQIIS…KNHEEEMQAL (92 aa)) is coil 1B. The linker 12 stretch occupies residues 224 to 246 (QCAAGGNVNVEMNAAPGVDLTVL). The interval 247–385 (LNNMRAEYEA…ETYCLLIGGD (139 aa)) is coil 2. A tail region spans residues 386-449 (EGSCVKSKGQ…NNKNEQRIPS (64 aa)). The interval 425–449 (LSSRVHTLEEKSTKVNNKNEQRIPS) is disordered. The span at 430 to 449 (HTLEEKSTKVNNKNEQRIPS) shows a compositional bias: basic and acidic residues.

The protein belongs to the intermediate filament family. As to quaternary structure, heterotetramer of two type I and two type II keratins. Interacts with KRT6A to form filaments.

It is found in the cytoplasm. In terms of biological role, essential for the proper assembly of type I and type II keratin protein complexes and formation of keratin intermediate filaments in the inner root sheath (irs). The chain is Keratin, type I cytoskeletal 27 from Rattus norvegicus (Rat).